The chain runs to 693 residues: MAFETFSVALDKDKTLIFETGKIARQANGAVLVKMNETWVFSSACAASLSEAVDFLPFRVDYQEKFSSAGKTSGGFLKREGRPSEKEILISRLIDRSLRPSFPNRLMQDIQVLSYVWSYDGKTLPDPLAICGASAALAISEVPQNCIVAGVRVGLVEGKWVVNPTKDELDASKLDLVMAGTASAVLMIEGHCDFLTEEQVLEAIAFGQKYIAKICDAIEAWQKAIGKEKQLSAVLDLPEDVQNVVSNFIREKFEKALSFRDRDALEQVSKELEESVVANLVQEESDFSLLNVKAAFKNAKSNQMRALIRDLGIRVDGRSTTEIRPISIEVSFLPRTHGSCLFTRGETQSVAVCTLGGESMAQRFEDLNGDGAARFYLQYFFPPFSVGEVGRIGSPGRREIGHGKLAEKALSHVLPEASRFPYTVRVESNITESNGSSSMASVCGGCLSLMDAGVPIKAPVAGIAMGLILDQDKAIVLSDISGIEDHLGDMDFKVAGTEEGITAFQMDIKVEGITHEIMEQALAQAKQGRSHILNLMTQVMSSPNDSVSRYAPRIETMQINTSKIATVIGPGGKQIRQIIERSGAQVDINDNGLINISANTQESIDKAKELIEGLTGEVEVGKIYNGRVTSVVAFGAFVEVLPGKEGLCHISELSKQKVDNVADFVKEGDRLAVKLLSINEKGQLKLSHKATLE.

Asp485 and Asp491 together coordinate Mg(2+). One can recognise a KH domain in the interval 552–611 (PRIETMQINTSKIATVIGPGGKQIRQIIERSGAQVDINDNGLINISANTQESIDKAKELI). The S1 motif domain occupies 621-689 (GKIYNGRVTS…EKGQLKLSHK (69 aa)).

This sequence belongs to the polyribonucleotide nucleotidyltransferase family. Mg(2+) serves as cofactor.

It localises to the cytoplasm. It carries out the reaction RNA(n+1) + phosphate = RNA(n) + a ribonucleoside 5'-diphosphate. Functionally, involved in mRNA degradation. Catalyzes the phosphorolysis of single-stranded polyribonucleotides processively in the 3'- to 5'-direction. This Chlamydia muridarum (strain MoPn / Nigg) protein is Polyribonucleotide nucleotidyltransferase.